We begin with the raw amino-acid sequence, 270 residues long: Electron transfer flavoprotein subunit beta (270 aa).

This sequence belongs to the ETF alpha-subunit/FixB family. As to quaternary structure, heterodimer of an alpha and a beta subunit. Requires FAD as cofactor.

Functionally, the electron transfer flavoprotein serves as a specific electron acceptor for other dehydrogenases. It transfers the electrons to the main respiratory chain via ETF-ubiquinone oxidoreductase (ETF dehydrogenase). The polypeptide is Electron transfer flavoprotein subunit beta (etfB) (Megasphaera elsdenii).